The sequence spans 354 residues: F-box/kelch-repeat protein At1g80440 (354 aa).

The F-box domain maps to 2–49; it reads ELIPNLPDDVARECLLRSSYQQFPVIASVCRAWNREVSLSQFLHQRKA. 4 Kelch repeats span residues 63 to 110, 115 to 163, 166 to 213, and 215 to 263; these read RVDP…CRLV, DLIV…ASDS, TVLV…FHAG, and FHVI…PPTC.

The sequence is that of F-box/kelch-repeat protein At1g80440 from Arabidopsis thaliana (Mouse-ear cress).